Here is a 102-residue protein sequence, read N- to C-terminus: Large ribosomal subunit protein uL24 (102 aa).

The protein belongs to the universal ribosomal protein uL24 family. Part of the 50S ribosomal subunit.

Functionally, one of two assembly initiator proteins, it binds directly to the 5'-end of the 23S rRNA, where it nucleates assembly of the 50S subunit. Its function is as follows. One of the proteins that surrounds the polypeptide exit tunnel on the outside of the subunit. The protein is Large ribosomal subunit protein uL24 of Leuconostoc mesenteroides subsp. mesenteroides (strain ATCC 8293 / DSM 20343 / BCRC 11652 / CCM 1803 / JCM 6124 / NCDO 523 / NBRC 100496 / NCIMB 8023 / NCTC 12954 / NRRL B-1118 / 37Y).